A 102-amino-acid polypeptide reads, in one-letter code: Small ribosomal subunit protein bS6 (102 aa).

It belongs to the bacterial ribosomal protein bS6 family.

Functionally, binds together with bS18 to 16S ribosomal RNA. The polypeptide is Small ribosomal subunit protein bS6 (rpsF) (Deinococcus radiodurans (strain ATCC 13939 / DSM 20539 / JCM 16871 / CCUG 27074 / LMG 4051 / NBRC 15346 / NCIMB 9279 / VKM B-1422 / R1)).